Consider the following 157-residue polypeptide: 17.8 kDa class I heat shock protein (157 aa).

Positions glutamate 41–serine 156 constitute a sHSP domain.

Belongs to the small heat shock protein (HSP20) family. As to quaternary structure, homodimer under normal physiological conditions. Aggregates in high oligomeric complexes after heat shock. Binds to AKR2A and to chloroplasts. As to expression, expressed ubiquitously at low levels under normal physiological conditions.

Its subcellular location is the cytoplasm. Cytosolic mediator for sorting and targeting of nascent chloroplast outer envelope membrane (OEM) proteins to the chloroplast. Functions as an AKR2A cofactor to facilitate the targeting of OEP7 to chloroplasts. The sequence is that of 17.8 kDa class I heat shock protein (HSP17.8) from Arabidopsis thaliana (Mouse-ear cress).